A 118-amino-acid polypeptide reads, in one-letter code: Large ribosomal subunit protein bL20 (118 aa).

This sequence belongs to the bacterial ribosomal protein bL20 family.

Binds directly to 23S ribosomal RNA and is necessary for the in vitro assembly process of the 50S ribosomal subunit. It is not involved in the protein synthesizing functions of that subunit. The polypeptide is Large ribosomal subunit protein bL20 (Staphylococcus epidermidis (strain ATCC 35984 / DSM 28319 / BCRC 17069 / CCUG 31568 / BM 3577 / RP62A)).